The chain runs to 260 residues: ATP synthase subunit a (260 aa).

The propeptide at 1–11 is removed in mature form; sequence MQNTLLRTYIN. Helical transmembrane passes span 37–57, 96–116, 126–146, 152–172, 192–212, and 217–237; these read ITTFTLYTIIVLLVVSSLYVL, YFPFIYTLFMFILISNLISMI, FVFIISLSMIIWLGITILSLF, FFSLFVPSGTALPLVPLLVVI, IFSGHLLMAILAGLTMTFVQI, and LILGFIPLAIILIIMCLEFGI.

Belongs to the ATPase A chain family. As to quaternary structure, F-type ATPases have 2 components, CF(1) - the catalytic core - and CF(0) - the membrane proton channel. CF(1) has five subunits: alpha(3), beta(3), gamma(1), delta(1), epsilon(1). CF(0) has three main subunits: a, b and c.

It is found in the mitochondrion inner membrane. Mitochondrial membrane ATP synthase (F(1)F(0) ATP synthase or Complex V) produces ATP from ADP in the presence of a proton gradient across the membrane which is generated by electron transport complexes of the respiratory chain. F-type ATPases consist of two structural domains, F(1) - containing the extramembraneous catalytic core and F(0) - containing the membrane proton channel, linked together by a central stalk and a peripheral stalk. During catalysis, ATP synthesis in the catalytic domain of F(1) is coupled via a rotary mechanism of the central stalk subunits to proton translocation. Key component of the proton channel; it may play a direct role in the translocation of protons across the membrane. In Candida glabrata (strain ATCC 2001 / BCRC 20586 / JCM 3761 / NBRC 0622 / NRRL Y-65 / CBS 138) (Yeast), this protein is ATP synthase subunit a (ATP6).